The following is a 421-amino-acid chain: tRNA(Ile)-lysidine synthase (421 aa).

ATP is bound at residue serine 26–serine 31.

It belongs to the tRNA(Ile)-lysidine synthase family.

Its subcellular location is the cytoplasm. The enzyme catalyses cytidine(34) in tRNA(Ile2) + L-lysine + ATP = lysidine(34) in tRNA(Ile2) + AMP + diphosphate + H(+). In terms of biological role, ligates lysine onto the cytidine present at position 34 of the AUA codon-specific tRNA(Ile) that contains the anticodon CAU, in an ATP-dependent manner. Cytidine is converted to lysidine, thus changing the amino acid specificity of the tRNA from methionine to isoleucine. This chain is tRNA(Ile)-lysidine synthase, found in Streptococcus thermophilus (strain CNRZ 1066).